The chain runs to 215 residues: Ras-related protein Rab-42 (215 aa).

GTP contacts are provided by Gly19, Gly21, Lys22, Thr23, and Thr44. Residues Thr23, Thr44, and Asp68 each coordinate Mg(2+). Positions 71, 128, 130, 157, and 158 each coordinate GTP. The segment at 196–215 (HRSPNPRSSSRKQDSGTCQC) is disordered. Residues Cys213 and Cys215 are each lipidated (S-geranylgeranyl cysteine).

Belongs to the small GTPase superfamily. Rab family. It depends on Mg(2+) as a cofactor.

It is found in the membrane. The catalysed reaction is GTP + H2O = GDP + phosphate + H(+). Its activity is regulated as follows. Regulated by guanine nucleotide exchange factors (GEFs) which promote the exchange of bound GDP for free GTP. Regulated by GTPase activating proteins (GAPs) which increase the GTP hydrolysis activity. Inhibited by GDP dissociation inhibitors (GDIs). In terms of biological role, the small GTPases Rab are key regulators of intracellular membrane trafficking, from the formation of transport vesicles to their fusion with membranes. Rabs cycle between an inactive GDP-bound form and an active GTP-bound form that is able to recruit to membranes different sets of downstream effectors directly responsible for vesicle formation, movement, tethering and fusion. The physiological function of RAB42 remains undefined. The polypeptide is Ras-related protein Rab-42 (Mus musculus (Mouse)).